The chain runs to 386 residues: S-adenosylmethionine synthase (386 aa).

H16 is an ATP binding site. D18 is a Mg(2+) binding site. K(+) is bound at residue E44. The L-methionine site is built by E57 and Q100. Residues 100-110 form a flexible loop region; that stretch reads QSPDINVGVDQ. Residues 164–166, 231–232, D240, 246–247, A263, and K267 each bind ATP; these read DGK, RF, and RK. L-methionine is bound at residue D240. K271 lines the L-methionine pocket.

This sequence belongs to the AdoMet synthase family. In terms of assembly, homotetramer; dimer of dimers. Requires Mg(2+) as cofactor. K(+) is required as a cofactor.

The protein localises to the cytoplasm. It carries out the reaction L-methionine + ATP + H2O = S-adenosyl-L-methionine + phosphate + diphosphate. The protein operates within amino-acid biosynthesis; S-adenosyl-L-methionine biosynthesis; S-adenosyl-L-methionine from L-methionine: step 1/1. In terms of biological role, catalyzes the formation of S-adenosylmethionine (AdoMet) from methionine and ATP. The overall synthetic reaction is composed of two sequential steps, AdoMet formation and the subsequent tripolyphosphate hydrolysis which occurs prior to release of AdoMet from the enzyme. This chain is S-adenosylmethionine synthase, found in Sulfurovum sp. (strain NBC37-1).